A 92-amino-acid polypeptide reads, in one-letter code: DNA-directed RNA polymerase subunit omega (92 aa).

The protein belongs to the RNA polymerase subunit omega family. As to quaternary structure, the RNAP catalytic core consists of 2 alpha, 1 beta, 1 beta' and 1 omega subunit. When a sigma factor is associated with the core the holoenzyme is formed, which can initiate transcription.

It carries out the reaction RNA(n) + a ribonucleoside 5'-triphosphate = RNA(n+1) + diphosphate. Functionally, promotes RNA polymerase assembly. Latches the N- and C-terminal regions of the beta' subunit thereby facilitating its interaction with the beta and alpha subunits. The protein is DNA-directed RNA polymerase subunit omega of Acinetobacter baumannii (strain AB307-0294).